The following is a 168-amino-acid chain: 6,7-dimethyl-8-ribityllumazine synthase (168 aa).

Residues tryptophan 31, 65–67 (SFE), and 90–92 (NVI) each bind 5-amino-6-(D-ribitylamino)uracil. Position 95–96 (95–96 (ET)) interacts with (2S)-2-hydroxy-3-oxobutyl phosphate. Residue histidine 98 is the Proton donor of the active site. Phenylalanine 123 contacts 5-amino-6-(D-ribitylamino)uracil. Arginine 137 is a (2S)-2-hydroxy-3-oxobutyl phosphate binding site.

The protein belongs to the DMRL synthase family.

The catalysed reaction is (2S)-2-hydroxy-3-oxobutyl phosphate + 5-amino-6-(D-ribitylamino)uracil = 6,7-dimethyl-8-(1-D-ribityl)lumazine + phosphate + 2 H2O + H(+). Its pathway is cofactor biosynthesis; riboflavin biosynthesis; riboflavin from 2-hydroxy-3-oxobutyl phosphate and 5-amino-6-(D-ribitylamino)uracil: step 1/2. Its function is as follows. Catalyzes the formation of 6,7-dimethyl-8-ribityllumazine by condensation of 5-amino-6-(D-ribitylamino)uracil with 3,4-dihydroxy-2-butanone 4-phosphate. This is the penultimate step in the biosynthesis of riboflavin. This Christiangramia forsetii (strain DSM 17595 / CGMCC 1.15422 / KT0803) (Gramella forsetii) protein is 6,7-dimethyl-8-ribityllumazine synthase.